A 383-amino-acid polypeptide reads, in one-letter code: Putative F-box protein At4g09190 (383 aa).

In terms of domain architecture, F-box spans 16-67 (RSQREHIPLDLIVEIVSSLPAKSIVRFRSVSKLWSSIITTPDFTSSVVTRSL).

This chain is Putative F-box protein At4g09190, found in Arabidopsis thaliana (Mouse-ear cress).